A 237-amino-acid polypeptide reads, in one-letter code: 3-oxoacyl-[acyl-carrier-protein] reductase (237 aa).

At M1 the chain carries N-acetylmethionine. Residues S11–I14 and R34–N35 each bind NADP(+). Residue K40 is modified to N6-acetyllysine. Residues D56 and A83–G85 each bind NADP(+). Residue K96 is modified to N6-acetyllysine. S135 is a substrate binding site. Residues Y148, K152, and V181–T183 contribute to the NADP(+) site. Y148 serves as the catalytic Proton acceptor. K195 is subject to N6-acetyllysine.

The protein belongs to the short-chain dehydrogenases/reductases (SDR) family. In terms of assembly, homotetramer (in vitro). Heterotetramer with HSD17B8; contains two molecules each of HSD17B8 and CBR4. Does not form homotetramers when HSD17B8 is coexpressed, only heterotetramers (in vitro). As to expression, detected in liver and kidney (at protein level). Displays the highest expression in neuronal and muscle tissues.

It localises to the mitochondrion matrix. The catalysed reaction is a (3R)-hydroxyacyl-[ACP] + NADP(+) = a 3-oxoacyl-[ACP] + NADPH + H(+). It carries out the reaction a quinone + NADPH + H(+) = a quinol + NADP(+). It functions in the pathway lipid metabolism; fatty acid biosynthesis. Its function is as follows. Component of the heterotetramer complex KAR (3-ketoacyl-[acyl carrier protein] reductase or 3-ketoacyl-[ACP] reductase) that forms part of the mitochondrial fatty acid synthase (mtFAS). Beta-subunit of the KAR heterotetramer complex, responsible for the 3-ketoacyl-ACP reductase activity of the mtFAS, reduces 3-oxoacyl-[ACP] to (3R)-hydroxyacyl-[ACP] in a NADPH-dependent manner with no chain length preference, thereby participating in mitochondrial fatty acid biosynthesis. The homotetramer has NADPH-dependent quinone reductase activity (in vitro), hence could play a role in protection against cytotoxicity of exogenous quinones. As a heterotetramer, it can also reduce 9,10-phenanthrenequinone, 1,4-benzoquinone and various other o-quinones and p-quinones (in vitro). The protein is 3-oxoacyl-[acyl-carrier-protein] reductase (CBR4) of Homo sapiens (Human).